A 292-amino-acid chain; its full sequence is Ribosomal protein L11 methyltransferase (292 aa).

Residues threonine 144, glycine 165, aspartate 187, and asparagine 229 each coordinate S-adenosyl-L-methionine.

This sequence belongs to the methyltransferase superfamily. PrmA family.

The protein resides in the cytoplasm. The catalysed reaction is L-lysyl-[protein] + 3 S-adenosyl-L-methionine = N(6),N(6),N(6)-trimethyl-L-lysyl-[protein] + 3 S-adenosyl-L-homocysteine + 3 H(+). Methylates ribosomal protein L11. This chain is Ribosomal protein L11 methyltransferase, found in Pseudomonas fluorescens (strain Pf0-1).